A 146-amino-acid chain; its full sequence is uncharacterized protein (146 aa).

This is an uncharacterized protein from Saccharomyces cerevisiae (strain ATCC 204508 / S288c) (Baker's yeast).